Consider the following 86-residue polypeptide: Small ribosomal subunit protein uS17 (86 aa).

This sequence belongs to the universal ribosomal protein uS17 family. Part of the 30S ribosomal subunit.

One of the primary rRNA binding proteins, it binds specifically to the 5'-end of 16S ribosomal RNA. The protein is Small ribosomal subunit protein uS17 of Streptococcus mutans serotype c (strain ATCC 700610 / UA159).